The following is a 450-amino-acid chain: Coiled-coil domain-containing protein 149-A (450 aa).

2 coiled-coil regions span residues Met1 to Lys197 and Ile259 to Ser286. Residues Ser290–Glu358 are disordered. Over residues Pro343–Thr354 the composition is skewed to polar residues.

It belongs to the CCDC149 family.

This chain is Coiled-coil domain-containing protein 149-A (ccdc149a), found in Danio rerio (Zebrafish).